Reading from the N-terminus, the 194-residue chain is Probable RNA 2'-phosphotransferase (194 aa).

It belongs to the KptA/TPT1 family.

Removes the 2'-phosphate from RNA via an intermediate in which the phosphate is ADP-ribosylated by NAD followed by a presumed transesterification to release the RNA and generate ADP-ribose 1''-2''-cyclic phosphate (APPR&gt;P). May function as an ADP-ribosylase. This is Probable RNA 2'-phosphotransferase from Burkholderia lata (strain ATCC 17760 / DSM 23089 / LMG 22485 / NCIMB 9086 / R18194 / 383).